We begin with the raw amino-acid sequence, 180 residues long: Large ribosomal subunit protein uL5 (180 aa).

Belongs to the universal ribosomal protein uL5 family. In terms of assembly, part of the 50S ribosomal subunit; part of the 5S rRNA/L5/L18/L25 subcomplex. Contacts the 5S rRNA and the P site tRNA. Forms a bridge to the 30S subunit in the 70S ribosome.

In terms of biological role, this is one of the proteins that bind and probably mediate the attachment of the 5S RNA into the large ribosomal subunit, where it forms part of the central protuberance. In the 70S ribosome it contacts protein S13 of the 30S subunit (bridge B1b), connecting the 2 subunits; this bridge is implicated in subunit movement. Contacts the P site tRNA; the 5S rRNA and some of its associated proteins might help stabilize positioning of ribosome-bound tRNAs. The protein is Large ribosomal subunit protein uL5 of Acholeplasma laidlawii (strain PG-8A).